The chain runs to 246 residues: Protein 3F (246 aa).

The signal sequence occupies residues 1–19 (MKLLSKLILTLALATYASA). Asn52 carries an N-linked (GlcNAc...) asparagine glycan. Residues 113-124 (EVRPIDRLKDNA) are compositionally biased toward basic and acidic residues. The disordered stretch occupies residues 113-223 (EVRPIDRLKD…EEAEHVEKGA (111 aa)). The segment covering 126-145 (AANTENAQKSPNTQSTQKGS) has biased composition (polar residues). 3 consecutive repeat copies span residues 145 to 153 (SPKSDAKEA), 154 to 162 (SPKTDAKEA), and 163 to 171 (SPKSDAKEA). The segment at 145 to 176 (SPKSDAKEASPKTDAKEASPKSDAKEASPKTD) is 3.5 X 9 AA tandem repeats of S-P-K-[ST]-D-A-K-E-A. Residues 146 to 177 (PKSDAKEASPKTDAKEASPKSDAKEASPKTDT) show a composition bias toward basic and acidic residues. The stretch at 172-176 (SPKTD) is one 4; truncated repeat. Residues 181-213 (SSPKTDTKSSTQKPSSSSDSSKAKAEANTAANN) show a composition bias toward low complexity.

The chain is Protein 3F (pspG) from Dictyostelium discoideum (Social amoeba).